A 227-amino-acid polypeptide reads, in one-letter code: Large ribosomal subunit protein uL3 (227 aa).

Gln-154 bears the N5-methylglutamine mark.

Belongs to the universal ribosomal protein uL3 family. In terms of assembly, part of the 50S ribosomal subunit. Forms a cluster with proteins L14 and L19. In terms of processing, methylated by PrmB.

One of the primary rRNA binding proteins, it binds directly near the 3'-end of the 23S rRNA, where it nucleates assembly of the 50S subunit. The chain is Large ribosomal subunit protein uL3 from Acidiphilium cryptum (strain JF-5).